Here is a 296-residue protein sequence, read N- to C-terminus: Cobalamin trafficking protein CblD (296 aa).

The N-terminal 38 residues, 1–38, are a transit peptide targeting the mitochondrion; sequence MAHVLCNRARLVSYLPGFCSLVKRVINPRAFSTAGSSG. Lys-203 bears the N6-acetyllysine mark.

As to quaternary structure, heterodimer with MMACHC. Forms a multiprotein complex with MMACHC, MTR and MTRR.

It is found in the cytoplasm. The protein localises to the mitochondrion. In terms of biological role, involved in cobalamin metabolism and trafficking. Plays a role in regulating the biosynthesis and the proportion of two coenzymes, methylcob(III)alamin (MeCbl) and 5'-deoxyadenosylcobalamin (AdoCbl). Promotes oxidation of cob(II)alamin bound to MMACHC. The processing of cobalamin in the cytosol occurs in a multiprotein complex composed of at least MMACHC, MMADHC, MTRR (methionine synthase reductase) and MTR (methionine synthase) which may contribute to shuttle safely and efficiently cobalamin towards MTR in order to produce methionine. The polypeptide is Cobalamin trafficking protein CblD (Mmadhc) (Rattus norvegicus (Rat)).